The chain runs to 184 residues: UPS-like protein C36.10 (184 aa).

The 172-residue stretch at 1-172 (MKIFESCHLF…VLEKINMSVF (172 aa)) folds into the PRELI/MSF1 domain.

It belongs to the slowmo family.

The protein resides in the cytoplasm. It localises to the mitochondrion inner membrane. The protein localises to the mitochondrion intermembrane space. Its function is as follows. Required for mitochondrial morphology. May control phospholipid metabolism in the mitochondrial intermembrane space. The chain is UPS-like protein C36.10 from Schizosaccharomyces pombe (strain 972 / ATCC 24843) (Fission yeast).